The sequence spans 269 residues: Formamidopyrimidine-DNA glycosylase (269 aa).

The active-site Schiff-base intermediate with DNA is P2. Catalysis depends on E3, which acts as the Proton donor. Residue K57 is the Proton donor; for beta-elimination activity of the active site. The DNA site is built by H90, R109, and K150. The FPG-type zinc finger occupies 235-269; sequence QVYGKAGESCPECGEAIQELKIGQRNTFYCSYCQC. The active-site Proton donor; for delta-elimination activity is R259.

The protein belongs to the FPG family. In terms of assembly, monomer. Zn(2+) serves as cofactor.

The enzyme catalyses Hydrolysis of DNA containing ring-opened 7-methylguanine residues, releasing 2,6-diamino-4-hydroxy-5-(N-methyl)formamidopyrimidine.. The catalysed reaction is 2'-deoxyribonucleotide-(2'-deoxyribose 5'-phosphate)-2'-deoxyribonucleotide-DNA = a 3'-end 2'-deoxyribonucleotide-(2,3-dehydro-2,3-deoxyribose 5'-phosphate)-DNA + a 5'-end 5'-phospho-2'-deoxyribonucleoside-DNA + H(+). Functionally, involved in base excision repair of DNA damaged by oxidation or by mutagenic agents. Acts as a DNA glycosylase that recognizes and removes damaged bases. Has a preference for oxidized purines, such as 7,8-dihydro-8-oxoguanine (8-oxoG). Has AP (apurinic/apyrimidinic) lyase activity and introduces nicks in the DNA strand. Cleaves the DNA backbone by beta-delta elimination to generate a single-strand break at the site of the removed base with both 3'- and 5'-phosphates. The sequence is that of Formamidopyrimidine-DNA glycosylase from Vibrio vulnificus (strain YJ016).